The following is a 31-amino-acid chain: Ranatuerin-2Ca (31 aa).

Cysteine 24 and cysteine 29 are oxidised to a cystine.

Expressed by the skin glands.

The protein resides in the secreted. Antibacterial activity against Gram-positive bacterium S.aureus and Gram-negative bacterium E.coli. Has activity against C.albicans. This chain is Ranatuerin-2Ca, found in Lithobates clamitans (Green frog).